The chain runs to 55 residues: Large ribosomal subunit protein bL33 (55 aa).

The protein belongs to the bacterial ribosomal protein bL33 family.

The polypeptide is Large ribosomal subunit protein bL33 (Rhizobium etli (strain CIAT 652)).